Consider the following 170-residue polypeptide: Crossover junction endodeoxyribonuclease RuvC (170 aa).

Catalysis depends on residues aspartate 11, glutamate 71, and aspartate 143. Mg(2+) contacts are provided by aspartate 11, glutamate 71, and aspartate 143.

This sequence belongs to the RuvC family. Homodimer which binds Holliday junction (HJ) DNA. The HJ becomes 2-fold symmetrical on binding to RuvC with unstacked arms; it has a different conformation from HJ DNA in complex with RuvA. In the full resolvosome a probable DNA-RuvA(4)-RuvB(12)-RuvC(2) complex forms which resolves the HJ. Mg(2+) is required as a cofactor.

The protein resides in the cytoplasm. It catalyses the reaction Endonucleolytic cleavage at a junction such as a reciprocal single-stranded crossover between two homologous DNA duplexes (Holliday junction).. Its function is as follows. The RuvA-RuvB-RuvC complex processes Holliday junction (HJ) DNA during genetic recombination and DNA repair. Endonuclease that resolves HJ intermediates. Cleaves cruciform DNA by making single-stranded nicks across the HJ at symmetrical positions within the homologous arms, yielding a 5'-phosphate and a 3'-hydroxyl group; requires a central core of homology in the junction. The consensus cleavage sequence is 5'-(A/T)TT(C/G)-3'. Cleavage occurs on the 3'-side of the TT dinucleotide at the point of strand exchange. HJ branch migration catalyzed by RuvA-RuvB allows RuvC to scan DNA until it finds its consensus sequence, where it cleaves and resolves the cruciform DNA. This Agrobacterium fabrum (strain C58 / ATCC 33970) (Agrobacterium tumefaciens (strain C58)) protein is Crossover junction endodeoxyribonuclease RuvC.